A 352-amino-acid chain; its full sequence is 3-isopropylmalate dehydrogenase (352 aa).

Residues arginine 91, arginine 101, arginine 129, and aspartate 218 each contribute to the substrate site. Mg(2+)-binding residues include aspartate 218, aspartate 242, and aspartate 246. Residue 281 to 293 (GSAPDIAGKGLAN) participates in NAD(+) binding.

This sequence belongs to the isocitrate and isopropylmalate dehydrogenases family. LeuB type 1 subfamily. In terms of assembly, homodimer. The cofactor is Mg(2+). It depends on Mn(2+) as a cofactor.

It localises to the cytoplasm. The catalysed reaction is (2R,3S)-3-isopropylmalate + NAD(+) = 4-methyl-2-oxopentanoate + CO2 + NADH. It functions in the pathway amino-acid biosynthesis; L-leucine biosynthesis; L-leucine from 3-methyl-2-oxobutanoate: step 3/4. In terms of biological role, catalyzes the oxidation of 3-carboxy-2-hydroxy-4-methylpentanoate (3-isopropylmalate) to 3-carboxy-4-methyl-2-oxopentanoate. The product decarboxylates to 4-methyl-2 oxopentanoate. The polypeptide is 3-isopropylmalate dehydrogenase (Novosphingobium aromaticivorans (strain ATCC 700278 / DSM 12444 / CCUG 56034 / CIP 105152 / NBRC 16084 / F199)).